A 205-amino-acid polypeptide reads, in one-letter code: Molybdenum cofactor guanylyltransferase (205 aa).

GTP contacts are provided by residues 14 to 16 (LAG), lysine 27, aspartate 77, and aspartate 107. Mg(2+) is bound at residue aspartate 107.

The protein belongs to the MobA family. As to quaternary structure, monomer. Mg(2+) is required as a cofactor.

The protein localises to the cytoplasm. It carries out the reaction Mo-molybdopterin + GTP + H(+) = Mo-molybdopterin guanine dinucleotide + diphosphate. Its function is as follows. Transfers a GMP moiety from GTP to Mo-molybdopterin (Mo-MPT) cofactor (Moco or molybdenum cofactor) to form Mo-molybdopterin guanine dinucleotide (Mo-MGD) cofactor. This is Molybdenum cofactor guanylyltransferase from Burkholderia cenocepacia (strain HI2424).